Here is a 128-residue protein sequence, read N- to C-terminus: MRYAIMVTGAAYGTQQASSALQFAHALLNEGHELASVFFYREGVYNANLLTSPASDEYDLVRAWQKLNTQHGVALNICVAAALRRGIIDETEAGRLGLPSANLQPGFTLSGLGALAEASLTCDRVVQF.

Cysteine 78 acts as the Cysteine persulfide intermediate in catalysis.

It belongs to the DsrE/TusD family. As to quaternary structure, heterohexamer, formed by a dimer of trimers. The hexameric TusBCD complex contains 2 copies each of TusB, TusC and TusD. The TusBCD complex interacts with TusE.

Its subcellular location is the cytoplasm. Part of a sulfur-relay system required for 2-thiolation of 5-methylaminomethyl-2-thiouridine (mnm(5)s(2)U) at tRNA wobble positions. Accepts sulfur from TusA and transfers it in turn to TusE. The chain is Sulfurtransferase TusD from Salmonella newport (strain SL254).